Here is a 353-residue protein sequence, read N- to C-terminus: Protein O-mannose kinase (353 aa).

The Cytoplasmic portion of the chain corresponds to 1–19; that stretch reads MEKKAHFVKRDFPPREAPS. The chain crosses the membrane as a helical; Signal-anchor for type II membrane protein span at residues 20–40; sequence LLLLLLVVAVLLLNALLYLYL. The Lumenal segment spans residues 41–353; that stretch reads GNLHGSSGRA…AAMPSTREML (313 aa). The region spanning 83–353 is the Protein kinase domain; sequence VRKLKCVGEG…AAMPSTREML (271 aa). Asn163 and Asn237 each carry an N-linked (GlcNAc...) asparagine glycan.

The protein belongs to the protein kinase superfamily. Ser/Thr protein kinase family. STKL subfamily.

The protein resides in the endoplasmic reticulum membrane. It catalyses the reaction 3-O-[beta-D-GalNAc-(1-&gt;3)-beta-D-GlcNAc-(1-&gt;4)-alpha-D-Man]-L-Thr-[protein] + ATP = 3-O-[beta-D-GalNAc-(1-&gt;3)-beta-D-GlcNAc-(1-&gt;4)-(O-6-P-alpha-D-Man)]-Thr-[protein] + ADP + H(+). Its function is as follows. Protein O-mannose kinase that specifically mediates phosphorylation at the 6-position of an O-mannose of the trisaccharide (N-acetylgalactosamine (GalNAc)-beta-1,3-N-acetylglucosamine (GlcNAc)-beta-1,4-mannose) to generate phosphorylated O-mannosyl trisaccharide (N-acetylgalactosamine-beta-1,3-N-acetylglucosamine-beta-1,4-(phosphate-6-)mannose). Phosphorylated O-mannosyl trisaccharide is a carbohydrate structure present in alpha-dystroglycan (DAG1), which is required for binding laminin G-like domain-containing extracellular proteins with high affinity. Only shows kinase activity when the GalNAc-beta-3-GlcNAc-beta-terminus is linked to the 4-position of O-mannose, suggesting that this disaccharide serves as the substrate recognition motif. This Gallus gallus (Chicken) protein is Protein O-mannose kinase (POMK).